We begin with the raw amino-acid sequence, 233 residues long: Modulator of macroautophagy TMEM150B (233 aa).

Topologically, residues 1–7 (MWGYLSL) are cytoplasmic. The chain crosses the membrane as a helical span at residues 8 to 28 (MPVFLAVWAISGVWIVFAIAV). Topologically, residues 29 to 51 (TNRTVDLSKGFPYISICGSFPPQ) are extracellular. An N-linked (GlcNAc...) asparagine glycan is attached at asparagine 30. Residues 52-72 (SCIFSQVLNMGAALAAWICIV) traverse the membrane as a helical segment. Topologically, residues 73–84 (RYHQLRDWGVRR) are cytoplasmic. The helical transmembrane segment at 85-105 (WPNQLILWTGLLCALGTSVVG) threads the bilayer. Residues 106–116 (NFQEKNQRPTH) are Extracellular-facing. A helical membrane pass occupies residues 117–137 (LAGAFLAFILGNVYFWLQLLL). The Cytoplasmic portion of the chain corresponds to 138–155 (WRLKRLPQPGAAWIGPLR). A helical membrane pass occupies residues 156-176 (LGLCSVCTILIVAMIVLHACS). Residues 177–185 (LRSVSAACE) are Extracellular-facing. Residues 186–206 (WVVAMLLFALFGLLAVDFSAL) traverse the membrane as a helical segment. The Cytoplasmic segment spans residues 207 to 233 (ESCTLCVQPWPSLSPPPASPISLPVQL).

It belongs to the DRAM/TMEM150 family. As to expression, highly expressed in the colon and lung with comparatively high levels also detectable in the lymph nodes, placenta, duodenum, peripheral blood mononuclear cells and spleen.

It localises to the cell membrane. It is found in the endosome membrane. Its subcellular location is the cytoplasmic vesicle. The protein resides in the autophagosome membrane. Modulator of macroautophagy that causes accumulation of autophagosomes under basal conditions and enhances autophagic flux. Represses cell death and promotes long-term clonogenic survival of cells grown in the absence of glucose in a macroautophagy-independent manner. May have some role in extracellular matrix engulfment or growth factor receptor recycling, both of which can modulate cell survival. The protein is Modulator of macroautophagy TMEM150B of Homo sapiens (Human).